The following is a 39-amino-acid chain: uncharacterized protein (39 aa).

A helical membrane pass occupies residues 18 to 38 (AIKVIALVVLITISAVVYLSV).

The protein localises to the membrane. This is an uncharacterized protein from Enterobacteriaceae (Bacteriophage Mu).